The sequence spans 219 residues: UPF0376 protein C36C5.12 (219 aa).

Residues 1 to 20 are Cytoplasmic-facing; the sequence is MGRLDVKNSWIEFHQDEMTS. A helical; Signal-anchor for type II membrane protein membrane pass occupies residues 21–43; sequence FLKLAIIGTVLLGVAHGANLTAA. The Extracellular portion of the chain corresponds to 44–219; sequence EKETYCELRS…VSKCDFSRLG (176 aa). Asparagine 104 and asparagine 204 each carry an N-linked (GlcNAc...) asparagine glycan.

Belongs to the UPF0376 family.

It localises to the membrane. This chain is UPF0376 protein C36C5.12, found in Caenorhabditis elegans.